The sequence spans 422 residues: Blood group Rh(D) polypeptide (422 aa).

12 helical membrane-spanning segments follow: residues 13-33 (LPLW…FLIG), 43-63 (FMAI…GFGF), 76-96 (VAFS…LDYF), 113-135 (FLSI…AVLG), 137-159 (VNLV…IRVA), 170-190 (IIMM…AWWL), 215-235 (LFAM…NSAL), 244-266 (AVFN…SALS), 272-292 (INMV…GAPS), 294-314 (LISS…ISIW), 335-355 (YTFG…HIIA), and 372-392 (VGAL…TGCL).

It belongs to the ammonium transporter (TC 2.A.49) family. Rh subfamily. Post-translationally, palmitoylated.

It is found in the cell membrane. Its function is as follows. May be part of an oligomeric complex which is likely to have a transport or channel function in the erythrocyte membrane. The chain is Blood group Rh(D) polypeptide (Rhd) from Rattus norvegicus (Rat).